A 469-amino-acid polypeptide reads, in one-letter code: Calcium/calmodulin-dependent protein kinase type IV (469 aa).

2 positions are modified to phosphoserine; by autocatalysis: S11 and S12. A Protein kinase domain is found at 42–296; it reads FEVESELGRG…TFQALQHPWV (255 aa). ATP is bound by residues 48–56 and K71; that span reads LGRGATSIV. An O-linked (GlcNAc) threonine glycan is attached at T53. S54 carries an O-linked (GlcNAc) serine glycan. O-linked (GlcNAc) serine glycosylation occurs at S133. D160 acts as the Proton acceptor in catalysis. Residue S185 is glycosylated (O-linked (GlcNAc) serine). T196 bears the Phosphothreonine mark. The autoinhibitory domain stretch occupies residues 297–336; sequence TGKAANFVHMDTAQKKLQEFNARRKLKAAVKAVVASSRLG. Residues 302-319 are PP2A-binding; it reads NFVHMDTAQKKLQEFNAR. Positions 318–337 are calmodulin-binding; it reads ARRKLKAAVKAVVASSRLGS. Position 332 is a phosphoserine; by autocatalysis (S332). A disordered region spans residues 336–469; the sequence is GSASSSHTSI…PQQDAIQPEY (134 aa). S337 is modified (phosphoserine). Residues S340, S341, and S352 are each glycosylated (O-linked (GlcNAc) serine). Residues 360–374 show a composition bias toward basic and acidic residues; it reads DAKDSTDLLGKKMQE. Acidic residues predominate over residues 375 to 388; that stretch reads EDQEEDQVEAEASA. The segment covering 389 to 409 has biased composition (basic and acidic residues); it reads DEMRKLQSEEVEKDAGVKEEE. Positions 417-426 are enriched in acidic residues; it reads DPEDELETDD. Residues 427–441 show a composition bias toward basic and acidic residues; it reads PEMKRDSEEKLKSVE. Phosphoserine occurs at positions 433 and 439. A compositionally biased stretch (acidic residues) spans 442-453; the sequence is EEMDPMTEEEAP.

The protein belongs to the protein kinase superfamily. CAMK Ser/Thr protein kinase family. CaMK subfamily. As to quaternary structure, monomer. Interacts with protein phosphatase 2A (PPP2CA/PPP2CB); the interaction is mutually exclusive with binding to Ca(2+)/calmodulin. Post-translationally, phosphorylated by CaMKK1 and CaMKK2 on Thr-196. Dephosphorylated by protein phosphatase 2A. Autophosphorylated on Ser-11 and Ser-12. Glycosylation at Ser-185 modulates the phosphorylation of CaMK4 at Thr-196 and negatively regulates its activity toward CREB1 in basal conditions and during early inomycin stimulation. Expressed in brain and testis.

Its subcellular location is the cytoplasm. The protein resides in the nucleus. It carries out the reaction L-seryl-[protein] + ATP = O-phospho-L-seryl-[protein] + ADP + H(+). The catalysed reaction is L-threonyl-[protein] + ATP = O-phospho-L-threonyl-[protein] + ADP + H(+). With respect to regulation, activated by Ca(2+)/calmodulin. Binding of calmodulin results in conformational change that relieves intrasteric autoinhibition and allows phosphorylation of Thr-196 within the activation loop by CaMKK1 or CaMKK2. Phosphorylation of Thr-196 results in a 10-20-fold increase in total activity to generate Ca(2+)/calmodulin-independent activity. Autophosphorylation of the N-terminus Ser-11 and Ser-12 is required for full activation. Inactivated by protein phosphatase 2A (PPP2CA/PPP2CB) which dephosphorylates Thr-196, thereby terminating autonomous activity and helping to maintain the enzyme in its autoinhibited state. Calcium/calmodulin-dependent protein kinase that operates in the calcium-triggered CaMKK-CaMK4 signaling cascade and regulates, mainly by phosphorylation, the activity of several transcription activators, such as CREB1, MEF2D, JUN and RORA, which play pivotal roles in immune response, inflammation, and memory consolidation. In the thymus, regulates the CD4(+)/CD8(+) double positive thymocytes selection threshold during T-cell ontogeny. In CD4 memory T-cells, is required to link T-cell antigen receptor (TCR) signaling to the production of IL2, IFNG and IL4 (through the regulation of CREB and MEF2). Regulates the differentiation and survival phases of osteoclasts and dendritic cells (DCs). Mediates DCs survival by linking TLR4 and the regulation of temporal expression of BCL2. Phosphorylates the transcription activator CREB1 on 'Ser-133' in hippocampal neuron nuclei and contribute to memory consolidation and long term potentiation (LTP) in the hippocampus. Can activate the MAP kinases MAPK1/ERK2, MAPK8/JNK1 and MAPK14/p38 and stimulate transcription through the phosphorylation of ELK1 and ATF2. Can also phosphorylate in vitro CREBBP, PRM2, MEF2A and STMN1/OP18. May be involved in spermatogenesis. This Mus musculus (Mouse) protein is Calcium/calmodulin-dependent protein kinase type IV (Camk4).